The following is a 386-amino-acid chain: Patatin-04/09 (386 aa).

An N-terminal signal peptide occupies residues 1-23 (MATTKSFLILFFMILATTSSTCA). Residues 32–229 (LSIDGGGIKG…TVGDPALLSL (198 aa)) form the PNPLA domain. A GXGXXG motif is present at residues 36–41 (GGGIKG). The GXSXG signature appears at 75-79 (GTSTG). Ser77 acts as the Nucleophile in catalysis. An N-linked (GlcNAc...) asparagine glycan is attached at Asn115. The Proton acceptor role is filled by Asp215. The short motif at 215-217 (DGG) is the DGA/G element. The stretch at 321 to 384 (ENALNGTTTE…DRKKLRANKA (64 aa)) forms a coiled coil. Asn325 carries an N-linked (GlcNAc...) asparagine glycan.

It belongs to the patatin family. Tuber.

The protein resides in the vacuole. Probable lipolytic acyl hydrolase (LAH), an activity which is thought to be involved in the response of tubers to pathogens. The polypeptide is Patatin-04/09 (Solanum tuberosum (Potato)).